We begin with the raw amino-acid sequence, 84 residues long: Small ribosomal subunit protein bS16 (84 aa).

This sequence belongs to the bacterial ribosomal protein bS16 family.

The sequence is that of Small ribosomal subunit protein bS16 from Burkholderia ambifaria (strain MC40-6).